Reading from the N-terminus, the 747-residue chain is Probable alpha-galactosidase C (747 aa).

A signal peptide spans 1-24 (MVAFMNSATFVAGLFTLWSRPIWA). N-linked (GlcNAc...) asparagine glycosylation is found at Asn-36, Asn-182, Asn-190, Asn-362, Asn-429, and Asn-449. Asp-507 acts as the Nucleophile in catalysis. Asn-534 carries an N-linked (GlcNAc...) asparagine glycan. Catalysis depends on Asp-569, which acts as the Proton donor.

The protein belongs to the glycosyl hydrolase 36 family. Homotetramer. Mg(2+) serves as cofactor. It depends on NAD(+) as a cofactor.

It is found in the secreted. It carries out the reaction Hydrolysis of terminal, non-reducing alpha-D-galactose residues in alpha-D-galactosides, including galactose oligosaccharides, galactomannans and galactolipids.. In terms of biological role, hydrolyzes a variety of simple alpha-D-galactoside as well as more complex molecules such as oligosaccharides and polysaccharides. The chain is Probable alpha-galactosidase C (aglC) from Aspergillus terreus (strain NIH 2624 / FGSC A1156).